The chain runs to 141 residues: HTH-type transcriptional repressor NsrR (141 aa).

The 128-residue stretch at 2 to 129 (QLTSFTDYGL…DNYTLADLVE (128 aa)) folds into the HTH rrf2-type domain. The segment at residues 28-51 (ISQVTEVYGVSRNHMVKIINQLSR) is a DNA-binding region (H-T-H motif). [2Fe-2S] cluster is bound by residues Cys91, Cys96, and Cys102.

Requires [2Fe-2S] cluster as cofactor.

Functionally, nitric oxide-sensitive repressor of genes involved in protecting the cell against nitrosative stress. May require iron for activity. This chain is HTH-type transcriptional repressor NsrR, found in Enterobacter sp. (strain 638).